The sequence spans 516 residues: uncharacterized protein (516 aa).

The N-terminal stretch at 1–17 (MSVWVALALLGMCVSCT) is a signal peptide. Disordered stretches follow at residues 29–197 (KEPP…EVPR) and 296–426 (RTVS…RDHL). Basic and acidic residues predominate over residues 71–85 (RVPESSQEREQKPES). Residues 122 to 144 (VAPPAPPAPTAPRPHRPSPPPVS) show a composition bias toward pro residues. A compositionally biased stretch (low complexity) spans 145–155 (PSASKPKQRAV). Positions 351-367 (KAQHGTPRPDEKKDREP) are enriched in basic and acidic residues. Residues 394–406 (SPASQPSAPSAAP) show a composition bias toward low complexity. Residues 415-426 (AHKEGQEKRDHL) show a composition bias toward basic and acidic residues.

This is an uncharacterized protein from Treponema pallidum (strain Nichols).